Reading from the N-terminus, the 81-residue chain is Omega-conotoxin-like TxO4 (81 aa).

Positions 1-22 (MKLTCVVIVAVLFLTAWTFVTA) are cleaved as a signal peptide. Positions 23 to 52 (VPHSSNALENLYLKARHEMENPEASKLNTR) are excised as a propeptide. 3 disulfides stabilise this stretch: cysteine 55–cysteine 72, cysteine 62–cysteine 76, and cysteine 71–cysteine 80. Proline 70 is subject to 4-hydroxyproline; partial. The residue at position 75 (tryptophan 75) is a 6'-bromotryptophan; partial.

The protein belongs to the conotoxin O1 superfamily. TxO4 is found with and without hydroxyproline and these two forms have a bromotryptophan. Truncated TxO4 is found with and without bromotryptophan, and these two forms have no hydroxyproline. In terms of tissue distribution, expressed by the venom duct.

The protein resides in the secreted. Omega-conotoxins act at presynaptic membranes, they bind and block voltage-gated calcium channels (Cav). This Conus textile (Cloth-of-gold cone) protein is Omega-conotoxin-like TxO4.